Reading from the N-terminus, the 949-residue chain is Insulin receptor substrate 1 (949 aa).

The 102-residue stretch at 8-109 (GMALSGYLKK…WLDKLLVLQR (102 aa)) folds into the PH domain. The IRS-type PTB domain maps to 122 to 236 (YDQVWQVVIQ…SAMSAKTESN (115 aa)). The segment at 247–270 (PDLSHEPMRKRSSSANEASKPINV) is disordered. Phosphoserine is present on residues Ser-286, Ser-287, and Ser-342. The segment covering 304–345 (RNGTLSESSNQTYFGSNHGLRSNTISGNRPHSTNKHSNSPTF) has biased composition (polar residues). The tract at residues 304-373 (RNGTLSESSN…SDDNGSYSHY (70 aa)) is disordered. The residue at position 410 (Tyr-410) is a Phosphotyrosine; by INSR. A YXXM motif 1 motif is present at residues 410-413 (YIPM). The segment at 530–556 (RSQSSITKEGSGYGTSGNRQKKSTSAP) is disordered. Ser-554 bears the Phosphoserine mark. The YXXM motif 2 motif lies at 640–643 (YLEM). Basic and acidic residues predominate over residues 696-706 (REQTTSEEKKS). Residues 696–718 (REQTTSEEKKSNSPLNEKPFSLK) are disordered. Tyr-892 is modified (phosphotyrosine; by INSR). Residues 906-949 (AKYLKRGSRESPPVSACPEDGNTYAKIDFDQSDSSSSSSNIFNT) are disordered. A phosphoserine mark is found at Ser-913 and Ser-916. Tyr-929 is modified (phosphotyrosine; by INSR). Residues 937–949 (SDSSSSSSNIFNT) show a composition bias toward low complexity.

In terms of assembly, bindings to phosphatidylinositol 3-kinase and SHP2.

In terms of biological role, activates phosphatidylinositol 3-kinase when bound to the regulatory p85 subunit. May mediate the control of various cellular processes by insulin-like peptides. When phosphorylated by the insulin receptor binds specifically to various cellular proteins containing SH2 domains. Involved in control of cell proliferation, cell size, and body and organ growth throughout development. Also has a role in a signaling pathway controlling the physiological response required to endure periods of low nutrient conditions. Insulin/insulin-like growth factor (IGF) signaling pathway has a role in regulating aging and is necessary in the ovary for vitellogenic maturation. The protein is Insulin receptor substrate 1 of Drosophila yakuba (Fruit fly).